The following is a 563-amino-acid chain: Autophagy-related protein 18 (563 aa).

WD repeat units follow at residues 36-74, 247-287, and 292-331; these read KTDD…GKCY, AHKS…KLFQ, and TYST…ALEN. The L/FRRG motif signature appears at 288–292; it reads FRRGT. Residues 329 to 430 are disordered; it reads LENKHKKKKA…SSQAAKNEPL (102 aa). Acidic residues predominate over residues 366-393; the sequence is TQDDDEFADDGDDSDEAVEGDDNDDESL. A compositionally biased stretch (low complexity) spans 404 to 417; the sequence is SQGSSNSFASFNSG.

The protein belongs to the WD repeat PROPPIN family. In terms of assembly, component of the PI(3,5)P2 regulatory complex.

The protein localises to the preautophagosomal structure membrane. It is found in the vacuole membrane. It localises to the endosome membrane. Its function is as follows. The PI(3,5)P2 regulatory complex regulates both the synthesis and turnover of phosphatidylinositol 3,5-bisphosphate (PtdIns(3,5)P2). Necessary for proper vacuole morphology. Plays an important role in osmotically-induced vacuole fragmentation. Required for cytoplasm to vacuole transport (Cvt) vesicle formation, pexophagy and starvation-induced autophagy. Involved in correct ATG9 trafficking to the pre-autophagosomal structure. Might also be involved in premeiotic DNA replication. This is Autophagy-related protein 18 (ATG18) from Scheffersomyces stipitis (strain ATCC 58785 / CBS 6054 / NBRC 10063 / NRRL Y-11545) (Yeast).